Consider the following 465-residue polypeptide: Fumarate hydratase class II (465 aa).

Substrate-binding positions include 98-100 (SGT), Arg126, 129-132 (HPND), 139-141 (SSN), and Thr187. The Proton donor/acceptor role is filled by His188. Residue Ser318 is part of the active site. Substrate is bound by residues Ser319 and 324–326 (KVN).

Belongs to the class-II fumarase/aspartase family. Fumarase subfamily. Homotetramer.

The protein localises to the cytoplasm. The enzyme catalyses (S)-malate = fumarate + H2O. It functions in the pathway carbohydrate metabolism; tricarboxylic acid cycle; (S)-malate from fumarate: step 1/1. Its function is as follows. Involved in the TCA cycle. Catalyzes the stereospecific interconversion of fumarate to L-malate. The sequence is that of Fumarate hydratase class II from Yersinia pestis.